The chain runs to 205 residues: Small ribosomal subunit protein uS4 (205 aa).

Residues 18-49 are disordered; sequence NIWGRPKSPVNKREYGPGQHGQRRKGKLSDFG. In terms of domain architecture, S4 RNA-binding spans 94-157; sequence RRLDTVVYRA…KQLALVLEAN (64 aa).

It belongs to the universal ribosomal protein uS4 family. In terms of assembly, part of the 30S ribosomal subunit. Contacts protein S5. The interaction surface between S4 and S5 is involved in control of translational fidelity.

Functionally, one of the primary rRNA binding proteins, it binds directly to 16S rRNA where it nucleates assembly of the body of the 30S subunit. In terms of biological role, with S5 and S12 plays an important role in translational accuracy. The protein is Small ribosomal subunit protein uS4 of Nitrobacter winogradskyi (strain ATCC 25391 / DSM 10237 / CIP 104748 / NCIMB 11846 / Nb-255).